The primary structure comprises 360 residues: Aminomethyltransferase (360 aa).

The protein belongs to the GcvT family. In terms of assembly, the glycine cleavage system is composed of four proteins: P, T, L and H.

The catalysed reaction is N(6)-[(R)-S(8)-aminomethyldihydrolipoyl]-L-lysyl-[protein] + (6S)-5,6,7,8-tetrahydrofolate = N(6)-[(R)-dihydrolipoyl]-L-lysyl-[protein] + (6R)-5,10-methylene-5,6,7,8-tetrahydrofolate + NH4(+). The glycine cleavage system catalyzes the degradation of glycine. The protein is Aminomethyltransferase of Exiguobacterium sibiricum (strain DSM 17290 / CCUG 55495 / CIP 109462 / JCM 13490 / 255-15).